Consider the following 158-residue polypeptide: 6,7-dimethyl-8-ribityllumazine synthase (158 aa).

5-amino-6-(D-ribitylamino)uracil-binding positions include Phe22, Ala57–Glu59, and Thr84–Ile86. Gly89–Thr90 is a binding site for (2S)-2-hydroxy-3-oxobutyl phosphate. His92 acts as the Proton donor in catalysis. Residue Phe117 participates in 5-amino-6-(D-ribitylamino)uracil binding. Arg131 provides a ligand contact to (2S)-2-hydroxy-3-oxobutyl phosphate.

Belongs to the DMRL synthase family. Forms an icosahedral capsid composed of 60 subunits, arranged as a dodecamer of pentamers.

The catalysed reaction is (2S)-2-hydroxy-3-oxobutyl phosphate + 5-amino-6-(D-ribitylamino)uracil = 6,7-dimethyl-8-(1-D-ribityl)lumazine + phosphate + 2 H2O + H(+). Its pathway is cofactor biosynthesis; riboflavin biosynthesis; riboflavin from 2-hydroxy-3-oxobutyl phosphate and 5-amino-6-(D-ribitylamino)uracil: step 1/2. Catalyzes the formation of 6,7-dimethyl-8-ribityllumazine by condensation of 5-amino-6-(D-ribitylamino)uracil with 3,4-dihydroxy-2-butanone 4-phosphate. This is the penultimate step in the biosynthesis of riboflavin. This chain is 6,7-dimethyl-8-ribityllumazine synthase, found in Pectobacterium atrosepticum (strain SCRI 1043 / ATCC BAA-672) (Erwinia carotovora subsp. atroseptica).